Here is a 430-residue protein sequence, read N- to C-terminus: Adenylosuccinate synthetase (430 aa).

GTP contacts are provided by residues 12-18 and 40-42; these read GDEGKGK and GHT. Residue D13 is the Proton acceptor of the active site. Mg(2+) contacts are provided by D13 and G40. Residues 13 to 16, 38 to 41, T128, R142, Q223, T238, and R302 contribute to the IMP site; these read DEGK and NAGH. The active-site Proton donor is H41. A substrate-binding site is contributed by 298–304; it reads TTTGRPR. GTP is bound by residues R304, 330-332, and 412-414; these read SID and SVG.

Belongs to the adenylosuccinate synthetase family. In terms of assembly, homodimer. Mg(2+) is required as a cofactor.

The protein localises to the cytoplasm. It catalyses the reaction IMP + L-aspartate + GTP = N(6)-(1,2-dicarboxyethyl)-AMP + GDP + phosphate + 2 H(+). It functions in the pathway purine metabolism; AMP biosynthesis via de novo pathway; AMP from IMP: step 1/2. In terms of biological role, plays an important role in the de novo pathway of purine nucleotide biosynthesis. Catalyzes the first committed step in the biosynthesis of AMP from IMP. The protein is Adenylosuccinate synthetase of Streptococcus equi subsp. equi (strain 4047).